The chain runs to 362 residues: RING finger protein 32 (362 aa).

The RING-type 1; atypical zinc-finger motif lies at 127–169; that stretch reads CPICKEEFELRPQVLLSCSHVFHKACLQAFEKFTNKKTCPLCR. The IQ domain maps to 186–215; the sequence is RIKCVTRIQAYWRGCVVRKWYRNLRKTVPP. Residues 293-352 form an RING-type 2; atypical zinc finger; the sequence is CSICLAPLSAAGGQRVGAGRRSREMALLSCSHVFHHACLLALEEFSVGDRPPFHACPLCR.

Highly expressed in testis, less abundant in ovary.

The protein resides in the cytoplasm. In terms of biological role, may play a role in sperm formation. The protein is RING finger protein 32 (RNF32) of Homo sapiens (Human).